Here is a 139-residue protein sequence, read N- to C-terminus: Putative pre-16S rRNA nuclease (139 aa).

The protein belongs to the YqgF nuclease family.

Its subcellular location is the cytoplasm. Its function is as follows. Could be a nuclease involved in processing of the 5'-end of pre-16S rRNA. The sequence is that of Putative pre-16S rRNA nuclease from Streptococcus pyogenes serotype M3 (strain ATCC BAA-595 / MGAS315).